A 353-amino-acid chain; its full sequence is Rhodopsin (353 aa).

The Extracellular portion of the chain corresponds to 1 to 36 (MNGTEGPYFYVPMVNTSGIVRSPYEYPQYYLVNPAA). N-linked (GlcNAc...) asparagine glycosylation is found at Asn2 and Asn15. The chain crosses the membrane as a helical span at residues 37–61 (YAALGAYMFLLILVGFPINFLTLYV). Residues 62-73 (TIEHKKLRTPLN) are Cytoplasmic-facing. The helical transmembrane segment at 74-96 (YILLNLAVADLFMVFGGFTTTMY) threads the bilayer. Topologically, residues 97-110 (TSMHGYFVLGRLGC) are extracellular. A disulfide bridge connects residues Cys110 and Cys187. Residues 111-133 (NIEGFFATLGGEIALWSLVVLAI) traverse the membrane as a helical segment. Residues 134–136 (ERW) carry the 'Ionic lock' involved in activated form stabilization motif. Over 134–152 (ERWVVVCKPISNFRFGENH) the chain is Cytoplasmic. A helical transmembrane segment spans residues 153 to 173 (AIMGLAFTWLMALACAAPPLV). Residues 174 to 202 (GWSRYIPEGMQCSCGIDYYTRAEGFNNES) lie on the Extracellular side of the membrane. N-linked (GlcNAc...) asparagine glycosylation is present at Asn200. Residues 203 to 224 (FVIYMFICHFSIPLLVVFFCYG) traverse the membrane as a helical segment. Topologically, residues 225-252 (RLLCAVKEAAAAQQESETTQRAEREVTR) are cytoplasmic. A helical membrane pass occupies residues 253 to 274 (MVIMMVIAFLVCWLPYASVAWW). Over 275-286 (IFTHQGSDFGPV) the chain is Extracellular. The chain crosses the membrane as a helical span at residues 287–308 (FMTIPAFFAKSSSIYNPMIYIC). Lys296 bears the N6-(retinylidene)lysine mark. Over 309 to 353 (LNKQFRHCMITTLCCGKNPFEEEEGASTASKTEASSVSSSSVSPA) the chain is Cytoplasmic. 2 S-palmitoyl cysteine lipidation sites follow: Cys322 and Cys323. The segment at 331–353 (EEGASTASKTEASSVSSSSVSPA) is disordered. Residues 334 to 353 (ASTASKTEASSVSSSSVSPA) are compositionally biased toward low complexity.

It belongs to the G-protein coupled receptor 1 family. Opsin subfamily. Post-translationally, phosphorylated on some or all of the serine and threonine residues present in the C-terminal region. In terms of processing, contains one covalently linked retinal chromophore.

Its subcellular location is the membrane. The protein localises to the cell projection. It localises to the cilium. It is found in the photoreceptor outer segment. Its function is as follows. Photoreceptor required for image-forming vision at low light intensity. While most salt water fish species use retinal as chromophore, most freshwater fish use 3-dehydroretinal, or a mixture of retinal and 3-dehydroretinal. Light-induced isomerization of 11-cis to all-trans retinal triggers a conformational change that activates signaling via G-proteins. Subsequent receptor phosphorylation mediates displacement of the bound G-protein alpha subunit by arrestin and terminates signaling. In Diplodus vulgaris (Common two-banded seabream), this protein is Rhodopsin (rho).